Consider the following 159-residue polypeptide: Regulatory protein RecX (159 aa).

The protein belongs to the RecX family.

It is found in the cytoplasm. Modulates RecA activity. The polypeptide is Regulatory protein RecX (Ralstonia pickettii (strain 12J)).